Consider the following 360-residue polypeptide: Aminomethyltransferase (360 aa).

The protein belongs to the GcvT family. The glycine cleavage system is composed of four proteins: P, T, L and H.

The catalysed reaction is N(6)-[(R)-S(8)-aminomethyldihydrolipoyl]-L-lysyl-[protein] + (6S)-5,6,7,8-tetrahydrofolate = N(6)-[(R)-dihydrolipoyl]-L-lysyl-[protein] + (6R)-5,10-methylene-5,6,7,8-tetrahydrofolate + NH4(+). Functionally, the glycine cleavage system catalyzes the degradation of glycine. This Pseudoalteromonas translucida (strain TAC 125) protein is Aminomethyltransferase.